The primary structure comprises 463 residues: MTTETRSLYSQLPAIDRLLHDSSFLSLRDTYGHTRVVELLRQMLDEAREVIRDSQTLPAWCENWAQEVDARLTKEAQSALRPVINLTGTVLHTNLGRALQAEAAVEAVAQAMRSPVTLEYDLDDAGRGHRDRALAQLLCRITGAEDACIVNNNAAAVLLMLAATASGKEVVVSRGELVEIGGAFRIPDVMRQAGCTLHEVGTTNRTHANDYRQAVNENTALLMKVHTSNYSIQGFTKAIDEAELVALGKELDVPVVTDLGSGSLVDLSQYGLPKEPMPQELIAAGVSLVSFSGDKLLGGPQAGIIVGKKEMIARLQSHPLKRALRADKMTLAALEATLRLYLHPEALSEKLPTLRLLTRSAEVIQIQAQRLQAPLAAHYGAEFAVQVMPCLSQIGSGSLPVDRLPSAALTFTPHDGRGSHLESLAARWRELPVPVIGRIYDGRLWLDLRCLEDEQRFLEMLLK.

N6-(pyridoxal phosphate)lysine is present on Lys-295.

Belongs to the SelA family. As to quaternary structure, homodecamer; pentamer of dimers. Binds only one seryl-tRNA(Sec) per dimer. Pyridoxal 5'-phosphate is required as a cofactor.

Its subcellular location is the cytoplasm. The catalysed reaction is L-seryl-tRNA(Sec) + selenophosphate + H(+) = L-selenocysteinyl-tRNA(Sec) + phosphate. It participates in aminoacyl-tRNA biosynthesis; selenocysteinyl-tRNA(Sec) biosynthesis; selenocysteinyl-tRNA(Sec) from L-seryl-tRNA(Sec) (bacterial route): step 1/1. Functionally, converts seryl-tRNA(Sec) to selenocysteinyl-tRNA(Sec) required for selenoprotein biosynthesis. The polypeptide is L-seryl-tRNA(Sec) selenium transferase (Shigella boydii serotype 4 (strain Sb227)).